Consider the following 328-residue polypeptide: Porphobilinogen deaminase (328 aa).

At cysteine 250 the chain carries S-(dipyrrolylmethanemethyl)cysteine.

The protein belongs to the HMBS family. In terms of assembly, monomer. Requires dipyrromethane as cofactor.

The catalysed reaction is 4 porphobilinogen + H2O = hydroxymethylbilane + 4 NH4(+). Its pathway is porphyrin-containing compound metabolism; protoporphyrin-IX biosynthesis; coproporphyrinogen-III from 5-aminolevulinate: step 2/4. Its function is as follows. Tetrapolymerization of the monopyrrole PBG into the hydroxymethylbilane pre-uroporphyrinogen in several discrete steps. The chain is Porphobilinogen deaminase from Burkholderia ambifaria (strain ATCC BAA-244 / DSM 16087 / CCUG 44356 / LMG 19182 / AMMD) (Burkholderia cepacia (strain AMMD)).